Here is a 254-residue protein sequence, read N- to C-terminus: Hydroxyacylglutathione hydrolase (254 aa).

Residues His52, His54, Asp56, His57, His109, Asp126, and His164 each coordinate Zn(2+).

The protein belongs to the metallo-beta-lactamase superfamily. Glyoxalase II family. As to quaternary structure, monomer. The cofactor is Zn(2+).

It carries out the reaction an S-(2-hydroxyacyl)glutathione + H2O = a 2-hydroxy carboxylate + glutathione + H(+). The protein operates within secondary metabolite metabolism; methylglyoxal degradation; (R)-lactate from methylglyoxal: step 2/2. In terms of biological role, thiolesterase that catalyzes the hydrolysis of S-D-lactoyl-glutathione to form glutathione and D-lactic acid. The polypeptide is Hydroxyacylglutathione hydrolase (Stenotrophomonas maltophilia (strain R551-3)).